A 168-amino-acid chain; its full sequence is Protein-export protein SecB (168 aa).

It belongs to the SecB family. In terms of assembly, homotetramer, a dimer of dimers. One homotetramer interacts with 1 SecA dimer.

It localises to the cytoplasm. Functionally, one of the proteins required for the normal export of preproteins out of the cell cytoplasm. It is a molecular chaperone that binds to a subset of precursor proteins, maintaining them in a translocation-competent state. It also specifically binds to its receptor SecA. In Haemophilus influenzae (strain PittGG), this protein is Protein-export protein SecB.